The primary structure comprises 575 residues: MEMISNNLNWFVGVVEDRMDPLKLGRVRVRVVGLHPPQRAQGDVMGIPTEKLPWMSVIQPITSAAMSGIGGSVTGPVEGTRVYGHFLDKWKTNGIVLGTYGGIVREKPNRLEGFSDPTGQYPRRLGNDTNVLNQGGEVGYDSSSNVIQDSNLDTAINPDDRPLSEIPTDDNPNMSMAEMLRRDEGLRLKVYWDTEGYPTIGIGHLIMKQPVRDMAQINKVLSKQVGREITGNPGSITMEEATTLFERDLADMQRDIKSHSKVGPVWQAVNRSRQMALENMAFQMGVGGVAKFNTMLTAMLAGDWEKAYKAGRDSLWYQQTKGRASRVTMIILTGNLESYGVEVKTPARSLSAMAATVAKSSDPADPPIPNDSRILFKEPVSSYKGEYPYVHTMETESGHIQEFDDTPGQERYRLVHPTGTYEEVSPSGRRTRKTVDNLYDITNADGNFLVAGDKKTNVGGSEIYYNMDNRLHQIDGSNTIFVRGDETKTVEGNGTILVKGNVTIIVEGNADITVKGDATTLVEGNQTNTVNGNLSWKVAGTVDWDVGGDWTEKMASMSSISSGQYTIDGSRIDIG.

The segment at 150-174 (SNLDTAINPDDRPLSEIPTDDNPNM) is disordered. The Proton donor role is filled by Glu-184. Residue Asp-193 is the Nucleophile of the active site.

This sequence belongs to the glycosyl hydrolase 24 family. Monomer. The central spike complex, which creates an extension of the tail tube, is made up of three copies of the gp27-gp5*-gp5C complex and one copy of gp5.4. Part of the baseplate macromolecular complex which consists of gp5*, gp5C, gp5.4, gp27 (central spike complex); gp6, gp25, gp53 (inner baseplate); gp7, gp8 (intermediate baseplate); gp9, gp10, gp11, gp12 (peripheral); gp48 and gp54 (proximal region of the tail tube). As to quaternary structure, homotrimer. The central spike complex, which creates an extension of the tail tube, is made up of three copies of the gp27-gp5*-gp5C complex and one copy of gp5.4. Part of the baseplate macromolecular complex which consists of gp5*, gp5C, gp5.4, gp27 (central spike complex); gp6, gp25, gp53 (inner baseplate); gp7, gp8 (intermediate baseplate); gp9, gp10, gp11, gp12 (peripheral); gp48 and gp54 (proximal region of the tail tube). In terms of assembly, homotrimer. In terms of processing, in the fully assembled virus, gp5 precursor is cleaved to form the mature tail lysozyme gp5*, and a C-terminus fragment, gp5C. The two fragments remain associated with the virion. The enzymatic activity of the precursor is about 10% of that of mature gp5*. PubMed:15342608 reported a cleavage at Val-390 but the cleavage has been mostly observed at Ser-351.

The protein localises to the virion. The catalysed reaction is Hydrolysis of (1-&gt;4)-beta-linkages between N-acetylmuramic acid and N-acetyl-D-glucosamine residues in a peptidoglycan and between N-acetyl-D-glucosamine residues in chitodextrins.. Its function is as follows. Baseplate central spike complex-associated lysozyme that is essential for the localized hydrolysis of bacterial cell wall, so that the tail tube, through which the phage DNA is ejected, can penetrate to the host inner membrane. The tail lysozyme complex at the tip of the tail tube penetrates through the outer membrane into the periplasm and during that process, gp5* dissociates from gp5C and activated. Due to the lower pH in the periplasm, gp5* would dissociate from gp27 which probably still binds to the tip of the tube. This way, lysozyme domain is released and locally digests the peptidoglycan layer to make a hole to let the tube penetrate to the inner membrane. Involved in the tail assembly. In Escherichia coli (Bacteriophage T4), this protein is Pre-baseplate central spike protein Gp5.